The sequence spans 270 residues: MLQVKNLSFKYPKHQNNVLNQISFNVQDGCHLAVIGHNGSGKSTLVKLLGGFLKAKKGTIFFNDKELTSVGFNKIGILLQDPDVQLLADTLHQELIFTLENHGVLASEMDKIINEVLTVVELKDKQFTPLKKLSFGEKQRAVFACLLAVKPQIYLLDEAFSMLDNKISNKLKKFVFDTIKKQNKIVINITHDFNDLFLADEIIFLSKGSLIKKFAPEAIYEQLDLFHNHHFNLPFPLLLAHKVAKQINKKTPSLSFELNDVVNWICKHLK.

In terms of domain architecture, ABC transporter spans Met1–Asn232. Gly36 to Ser43 contacts ATP.

Belongs to the ABC transporter superfamily.

This chain is Putative ABC transporter ATP-binding protein MG304, found in Mycoplasma genitalium (strain ATCC 33530 / DSM 19775 / NCTC 10195 / G37) (Mycoplasmoides genitalium).